Consider the following 1043-residue polypeptide: Rho GTPase-activating protein gacZ (1043 aa).

The disordered stretch occupies residues methionine 1–isoleucine 44. Positions asparagine 14–isoleucine 44 are enriched in low complexity. Zn(2+) contacts are provided by cysteine 71, cysteine 74, cysteine 82, cysteine 85, cysteine 91, histidine 95, histidine 103, and cysteine 107. An MYND-type; atypical zinc finger spans residues cysteine 71–cysteine 107. Disordered regions lie at residues serine 137–asparagine 163, histidine 199–asparagine 532, aspartate 546–arginine 594, phenylalanine 614–asparagine 690, asparagine 706–alanine 772, and asparagine 801–asparagine 842. Over residues glutamine 201 to proline 225 the composition is skewed to low complexity. Polar residues predominate over residues serine 241–isoleucine 253. 2 stretches are compositionally biased toward low complexity: residues asparagine 254 to glycine 293 and asparagine 307 to glutamate 411. Residues glycine 453–phenylalanine 466 show a composition bias toward polar residues. Composition is skewed to low complexity over residues asparagine 467–asparagine 532 and glycine 547–arginine 594. The segment covering tyrosine 615–tyrosine 625 has biased composition (polar residues). Acidic residues predominate over residues glutamate 644–aspartate 671. Low complexity-rich tracts occupy residues aspartate 726–threonine 736, serine 752–serine 771, asparagine 801–asparagine 821, and asparagine 829–asparagine 842. Residues aspartate 825–isoleucine 852 are a coiled coil. Residues isoleucine 855–serine 1043 form the Rho-GAP domain.

It is found in the cytoplasm. Its function is as follows. Rho GTPase-activating protein involved in the signal transduction pathway. The polypeptide is Rho GTPase-activating protein gacZ (gacZ) (Dictyostelium discoideum (Social amoeba)).